The following is a 906-amino-acid chain: Gamma-tubulin complex component 3 homolog (906 aa).

The segment covering 208-229 (GQQPSQQSTTTKGLPNTVSRNV) has biased composition (polar residues). A disordered region spans residues 208–242 (GQQPSQQSTTTKGLPNTVSRNVPRTRREGDSSGSV).

Belongs to the TUBGCP family. As to quaternary structure, interacts with gamma-tubulin.

The protein localises to the cytoplasm. The protein resides in the cytoskeleton. Its subcellular location is the microtubule organizing center. It is found in the centrosome. Necessary for the recruitment of gamma-tubulin to the centrosome and for the formation of a functional centrosome. This Xenopus laevis (African clawed frog) protein is Gamma-tubulin complex component 3 homolog (tubgcp3).